A 439-amino-acid chain; its full sequence is Xylose isomerase (439 aa).

Catalysis depends on residues histidine 101 and aspartate 104. Glutamate 232, glutamate 268, histidine 271, aspartate 296, aspartate 307, aspartate 309, and aspartate 339 together coordinate Mg(2+).

This sequence belongs to the xylose isomerase family. As to quaternary structure, homotetramer. Mg(2+) serves as cofactor.

It localises to the cytoplasm. The catalysed reaction is alpha-D-xylose = alpha-D-xylulofuranose. The polypeptide is Xylose isomerase (Pectobacterium atrosepticum (strain SCRI 1043 / ATCC BAA-672) (Erwinia carotovora subsp. atroseptica)).